Consider the following 165-residue polypeptide: SsrA-binding protein (165 aa).

Residues Gln-135 to Arg-158 show a composition bias toward basic and acidic residues. Positions Gln-135–Ser-165 are disordered.

It belongs to the SmpB family.

The protein resides in the cytoplasm. Its function is as follows. Required for rescue of stalled ribosomes mediated by trans-translation. Binds to transfer-messenger RNA (tmRNA), required for stable association of tmRNA with ribosomes. tmRNA and SmpB together mimic tRNA shape, replacing the anticodon stem-loop with SmpB. tmRNA is encoded by the ssrA gene; the 2 termini fold to resemble tRNA(Ala) and it encodes a 'tag peptide', a short internal open reading frame. During trans-translation Ala-aminoacylated tmRNA acts like a tRNA, entering the A-site of stalled ribosomes, displacing the stalled mRNA. The ribosome then switches to translate the ORF on the tmRNA; the nascent peptide is terminated with the 'tag peptide' encoded by the tmRNA and targeted for degradation. The ribosome is freed to recommence translation, which seems to be the essential function of trans-translation. The sequence is that of SsrA-binding protein from Mycolicibacterium vanbaalenii (strain DSM 7251 / JCM 13017 / BCRC 16820 / KCTC 9966 / NRRL B-24157 / PYR-1) (Mycobacterium vanbaalenii).